Here is a 411-residue protein sequence, read N- to C-terminus: ATPase GET3B (411 aa).

Residues M1–S67 constitute a chloroplast transit peptide. K95–S102 is an ATP binding site. The active site involves D124. N348 lines the ATP pocket.

It belongs to the arsA ATPase family.

It is found in the plastid. It localises to the chloroplast stroma. It carries out the reaction ATP + H2O = ADP + phosphate + H(+). The polypeptide is ATPase GET3B (Arabidopsis thaliana (Mouse-ear cress)).